The sequence spans 392 residues: Aminomethyltransferase, mitochondrial (392 aa).

A mitochondrion-targeting transit peptide spans 1-16 (MLRAGCRAALARRHLS). Positions 221, 250, and 388 each coordinate substrate.

Belongs to the GcvT family. In terms of assembly, the glycine cleavage system is composed of four proteins: P, T, L and H.

The protein localises to the mitochondrion. The enzyme catalyses N(6)-[(R)-S(8)-aminomethyldihydrolipoyl]-L-lysyl-[protein] + (6S)-5,6,7,8-tetrahydrofolate = N(6)-[(R)-dihydrolipoyl]-L-lysyl-[protein] + (6R)-5,10-methylene-5,6,7,8-tetrahydrofolate + NH4(+). Its function is as follows. The glycine cleavage system catalyzes the degradation of glycine. In Gallus gallus (Chicken), this protein is Aminomethyltransferase, mitochondrial.